Consider the following 1004-residue polypeptide: DNA-directed RNA polymerase subunit beta' (1004 aa).

Positions 388, 390, and 392 each coordinate Mg(2+). Zn(2+) is bound by residues C757, C831, C838, and C841.

It belongs to the RNA polymerase beta' chain family. As to quaternary structure, the RNAP catalytic core consists of 2 alpha, 1 beta, 1 beta' and 1 omega subunit. When a sigma factor is associated with the core the holoenzyme is formed, which can initiate transcription. The cofactor is Mg(2+). Zn(2+) is required as a cofactor.

The enzyme catalyses RNA(n) + a ribonucleoside 5'-triphosphate = RNA(n+1) + diphosphate. DNA-dependent RNA polymerase catalyzes the transcription of DNA into RNA using the four ribonucleoside triphosphates as substrates. The polypeptide is DNA-directed RNA polymerase subunit beta' (Oenococcus oeni (Leuconostoc oenos)).